The sequence spans 453 residues: Bifunctional protein GlmU (453 aa).

The tract at residues 1–226 (MSLNVVILAA…AMEVEGANNR (226 aa)) is pyrophosphorylase. Residues 8-11 (LAAG), Lys-22, Gln-73, 78-79 (GT), 100-102 (YGD), Gly-137, Glu-151, Asn-166, and Asn-224 contribute to the UDP-N-acetyl-alpha-D-glucosamine site. Residue Asp-102 participates in Mg(2+) binding. Residue Asn-224 coordinates Mg(2+). Positions 227–247 (VQLAQLERSYQKMQAERLMIA) are linker. Residues 248-453 (GATLIDPARF…QNWARPVKKK (206 aa)) are N-acetyltransferase. Positions 330 and 348 each coordinate UDP-N-acetyl-alpha-D-glucosamine. His-360 acts as the Proton acceptor in catalysis. The UDP-N-acetyl-alpha-D-glucosamine site is built by Tyr-363 and Asn-374. Acetyl-CoA is bound by residues Ala-377, 383 to 384 (NY), Ser-402, Ala-420, and Arg-437.

In the N-terminal section; belongs to the N-acetylglucosamine-1-phosphate uridyltransferase family. It in the C-terminal section; belongs to the transferase hexapeptide repeat family. In terms of assembly, homotrimer. Mg(2+) is required as a cofactor.

It localises to the cytoplasm. It carries out the reaction alpha-D-glucosamine 1-phosphate + acetyl-CoA = N-acetyl-alpha-D-glucosamine 1-phosphate + CoA + H(+). The catalysed reaction is N-acetyl-alpha-D-glucosamine 1-phosphate + UTP + H(+) = UDP-N-acetyl-alpha-D-glucosamine + diphosphate. Its pathway is nucleotide-sugar biosynthesis; UDP-N-acetyl-alpha-D-glucosamine biosynthesis; N-acetyl-alpha-D-glucosamine 1-phosphate from alpha-D-glucosamine 6-phosphate (route II): step 2/2. The protein operates within nucleotide-sugar biosynthesis; UDP-N-acetyl-alpha-D-glucosamine biosynthesis; UDP-N-acetyl-alpha-D-glucosamine from N-acetyl-alpha-D-glucosamine 1-phosphate: step 1/1. It participates in bacterial outer membrane biogenesis; LPS lipid A biosynthesis. Its function is as follows. Catalyzes the last two sequential reactions in the de novo biosynthetic pathway for UDP-N-acetylglucosamine (UDP-GlcNAc). The C-terminal domain catalyzes the transfer of acetyl group from acetyl coenzyme A to glucosamine-1-phosphate (GlcN-1-P) to produce N-acetylglucosamine-1-phosphate (GlcNAc-1-P), which is converted into UDP-GlcNAc by the transfer of uridine 5-monophosphate (from uridine 5-triphosphate), a reaction catalyzed by the N-terminal domain. This is Bifunctional protein GlmU from Aeromonas hydrophila subsp. hydrophila (strain ATCC 7966 / DSM 30187 / BCRC 13018 / CCUG 14551 / JCM 1027 / KCTC 2358 / NCIMB 9240 / NCTC 8049).